We begin with the raw amino-acid sequence, 225 residues long: Octanoyltransferase (225 aa).

The 176-residue stretch at 44 to 219 (RETPDEIWLL…NFIAQLTHRI (176 aa)) folds into the BPL/LPL catalytic domain. Residues 83-90 (RGGQITYH), 150-152 (SLG), and 163-165 (GIA) each bind substrate. C181 serves as the catalytic Acyl-thioester intermediate.

It belongs to the LipB family.

It is found in the cytoplasm. The enzyme catalyses octanoyl-[ACP] + L-lysyl-[protein] = N(6)-octanoyl-L-lysyl-[protein] + holo-[ACP] + H(+). It participates in protein modification; protein lipoylation via endogenous pathway; protein N(6)-(lipoyl)lysine from octanoyl-[acyl-carrier-protein]: step 1/2. Its function is as follows. Catalyzes the transfer of endogenously produced octanoic acid from octanoyl-acyl-carrier-protein onto the lipoyl domains of lipoate-dependent enzymes. Lipoyl-ACP can also act as a substrate although octanoyl-ACP is likely to be the physiological substrate. This chain is Octanoyltransferase, found in Nitrosomonas eutropha (strain DSM 101675 / C91 / Nm57).